We begin with the raw amino-acid sequence, 134 residues long: DNA-binding protein inhibitor ID-2 (134 aa).

Phosphoserine is present on residues serine 14 and serine 25. Residues 23–75 (SRSKTPVDDPMSLLYNMNDCYSKLKELVPSIPQNKKVSKMEILQHVIDYILDL) enclose the bHLH domain. The short motif at 106–115 (LNTDISILSL) is the Nuclear export signal element.

Interacts with GATA4 and NKX2-5. Interacts with NR0B2. Interacts with CLOCK and BMAL1. Interacts with IFI204. Interacts with NEDD9/HEF1. Interacts with ASB4; this interaction promotes ID2 proteasomal degradation. In terms of processing, ubiquitinated in a ASB4-depedent manner, leading to proteasomal degradation. Post-translationally, phosphorylated in vitro by CDK1, PKA and PKC. Highly expressed in early fetal tissues, including those of the central nervous system.

The protein localises to the cytoplasm. The protein resides in the nucleus. In terms of biological role, transcriptional regulator (lacking a basic DNA binding domain) which negatively regulates the basic helix-loop-helix (bHLH) transcription factors by forming heterodimers and inhibiting their DNA binding and transcriptional activity. Implicated in regulating a variety of cellular processes, including cellular growth, senescence, differentiation, apoptosis, angiogenesis, and neoplastic transformation. Inhibits skeletal muscle and cardiac myocyte differentiation. Regulates the circadian clock by repressing the transcriptional activator activity of the CLOCK-BMAL1 heterodimer. Restricts the CLOCK and BMAL1 localization to the cytoplasm. Plays a role in both the input and output pathways of the circadian clock: in the input component, is involved in modulating the magnitude of photic entrainment and in the output component, contributes to the regulation of a variety of liver clock-controlled genes involved in lipid metabolism. The sequence is that of DNA-binding protein inhibitor ID-2 (ID2) from Homo sapiens (Human).